Here is a 758-residue protein sequence, read N- to C-terminus: Dolichyl-phosphooligosaccharide-protein glycotransferase 2 (758 aa).

Topologically, residues 1–6 (MKRRYS) are cytoplasmic. The helical transmembrane segment at 7–27 (ILIILLVAIFYRMITFRFKYL) threads the bilayer. The Extracellular portion of the chain corresponds to 28-92 (LGYDPYFHLA…KVFGVSLTTT (65 aa)). The DXD motif 1 motif lies at 29-31 (GYD). D31 is a Mn(2+) binding site. The helical transmembrane segment at 93–113 (FKITPVIFGVLTVIFLYLSLL) threads the bilayer. The Cytoplasmic segment spans residues 114–120 (KLYDEKR). A helical transmembrane segment spans residues 121-141 (AFFGGFFLAISYGHVFRSMAN). The Extracellular portion of the chain corresponds to 142 to 145 (YYRG). Residues R144 and D146 each contribute to the Mn(2+) site. The short motif at 144–146 (RGD) is the DXD motif 2 element. The chain crosses the membrane as a helical span at residues 146–166 (DNYMLFWYSVALLGISLALGI). The Cytoplasmic portion of the chain corresponds to 167–175 (KKGKWKYKR). 2 helical membrane-spanning segments follow: residues 176–196 (LIFY…WQAY) and 197–217 (YPIF…AFIL). Residues 218–226 (KKDKYLLDS) are Cytoplasmic-facing. A helical transmembrane segment spans residues 227 to 247 (IILILSTAFGVLLANYLGGIF). At 248–281 (GYGMLGYAKWLGKSVAKKLGLEFGYLKDVYLILH) the chain is on the extracellular side. Residues 282-302 (LKYLVPISLSFVLVLILLGFL) form a helical membrane-spanning segment. Topologically, residues 303 to 310 (TKDIRIRS) are cytoplasmic. Residues 311 to 331 (LFLGIASFIGIIILFKRFEAL) form a helical membrane-spanning segment. Over 332–352 (KELSTGFGIFKEAPILETQPT) the chain is Extracellular. Residues 340 to 343 (IFKE) carry the TIXE motif motif. Residues 353-373 (SFKDLWAAFSLSFFLTPLFFI) traverse the membrane as a helical segment. The Cytoplasmic portion of the chain corresponds to 374–379 (RFKKPR). Residues 380 to 400 (VEDFLTLGLIIPSVYMLKTWT) traverse the membrane as a helical segment. R401 is a topological domain (extracellular). An a glycophospholipid-binding site is contributed by R401. The helical transmembrane segment at 402 to 422 (FLFIGSMAIAIMSGIGIVELY) threads the bilayer. Residues 423 to 433 (EAIKPRLNGKK) are Cytoplasmic-facing. A helical membrane pass occupies residues 434-454 (ALATGIITLVILPGVIAGLSF). The Extracellular segment spans residues 455 to 758 (KEVCSLHPEM…DRGVFRLSYN (304 aa)). An interacts with target acceptor peptide in protein substrate region spans residues 488-490 (WWD). The short motif at 488 to 492 (WWDWG) is the WWDYG motif element. Positions 540–547 (DFLKFGAI) match the DK motif motif.

Belongs to the STT3 family. Mn(2+) is required as a cofactor. It depends on Mg(2+) as a cofactor.

It localises to the cell membrane. The enzyme catalyses an archaeal dolichyl phosphooligosaccharide + [protein]-L-asparagine = an archaeal dolichyl phosphate + a glycoprotein with the oligosaccharide chain attached by N-beta-D-glycosyl linkage to a protein L-asparagine.. It functions in the pathway protein modification; protein glycosylation. Its function is as follows. Oligosaccharyl transferase (OST) that catalyzes the initial transfer of a defined glycan (ManNAcXyl(2)GlcAMan(2)GalNAc in Pyrococcus) from the lipid carrier dolichol-monophosphate to an asparagine residue within an Asn-X-Ser/Thr consensus motif in nascent polypeptide chains, the first step in protein N-glycosylation. In Pyrococcus horikoshii (strain ATCC 700860 / DSM 12428 / JCM 9974 / NBRC 100139 / OT-3), this protein is Dolichyl-phosphooligosaccharide-protein glycotransferase 2 (aglB2).